The chain runs to 237 residues: Large ribosomal subunit protein uL22m (237 aa).

It belongs to the universal ribosomal protein uL22 family.

It localises to the mitochondrion. The chain is Large ribosomal subunit protein uL22m (mrpl22) from Dictyostelium discoideum (Social amoeba).